Reading from the N-terminus, the 847-residue chain is B-cell receptor CD22 (847 aa).

Positions 1-19 (MHLLGPWLLLLVLEYLAFS) are cleaved as a signal peptide. Residues 20–138 (DSSKWAFEHP…MERIHLNVSE (119 aa)) enclose the Ig-like V-type domain. At 20-687 (DSSKWAFEHP…YYSPETIGRR (668 aa)) the chain is on the extracellular side. N-linked (GlcNAc...) asparagine glycosylation is found at asparagine 67, asparagine 101, and asparagine 112. Arginine 120 contacts N-acetylneuraminate. 3 N-linked (GlcNAc...) asparagine glycosylation sites follow: asparagine 135, asparagine 164, and asparagine 231. Ig-like C2-type domains follow at residues 143–235 (PHIQ…DTVQ), 242–326 (PKLE…VFLQ), 331–416 (PEPS…LDVQ), 419–500 (PKKV…VALN), 505–582 (PRDV…QTAS), and 593–676 (PRRL…STLT). Cysteine 161 and cysteine 219 are joined by a disulfide. 2 disulfide bridges follow: cysteine 265/cysteine 309 and cysteine 353/cysteine 396. Asparagine 363, asparagine 428, asparagine 445, asparagine 448, and asparagine 479 each carry an N-linked (GlcNAc...) asparagine glycan. Intrachain disulfides connect cysteine 442–cysteine 484 and cysteine 529–cysteine 571. N-linked (GlcNAc...) asparagine glycosylation is found at asparagine 574 and asparagine 634. Cysteine 616 and cysteine 659 are disulfide-bonded. The helical transmembrane segment at 688 to 708 (VAVGFGSCLAILILAICGLKL) threads the bilayer. Residues 709–847 (QRRWKRTQSQ…ENVDYVILKH (139 aa)) are Cytoplasmic-facing. Residues serine 725, serine 726, and serine 729 each carry the phosphoserine modification. Short sequence motifs (ITIM motif) lie at residues 760 to 765 (ISYTTL) and 794 to 799 (VTYSVL). The residue at position 762 (tyrosine 762) is a Phosphotyrosine. 3 positions are modified to phosphotyrosine: tyrosine 807, tyrosine 822, and tyrosine 842. 2 consecutive short sequence motifs (ITIM motif) follow at residues 820–825 (IHYSEL) and 840–845 (VDYVIL).

Belongs to the immunoglobulin superfamily. SIGLEC (sialic acid binding Ig-like lectin) family. Predominantly monomer of isoform CD22-beta. Also found as heterodimer of isoform CD22-beta and a shorter isoform. Interacts with PTPN6/SHP-1, LYN, SYK, PIK3R1/PIK3R2 and PLCG1 upon phosphorylation. Interacts with GRB2, INPP5D and SHC1 upon phosphorylation. May form a complex with INPP5D/SHIP, GRB2 and SHC1. In terms of processing, phosphorylation of Tyr-762, Tyr-807 and Tyr-822 are involved in binding to SYK, GRB2 and SYK, respectively. Phosphorylation of Tyr-842 is involved in binding to SYK, PLCG2 and PIK3R1/PIK3R2. Post-translationally, phosphorylated on tyrosine residues by LYN.

The protein localises to the cell membrane. Functionally, most highly expressed siglec (sialic acid-binding immunoglobulin-like lectin) on B-cells that plays a role in various aspects of B-cell biology including differentiation, antigen presentation, and trafficking to bone marrow. Binds to alpha 2,6-linked sialic acid residues of surface molecules such as CD22 itself, CD45 and IgM in a cis configuration. Can also bind to ligands on other cells as an adhesion molecule in a trans configuration. Acts as an inhibitory coreceptor on the surface of B-cells and inhibits B-cell receptor induced signaling, characterized by inhibition of the calcium mobilization and cellular activation. Mechanistically, the immunoreceptor tyrosine-based inhibitory motif domain is phosphorylated by the Src kinase LYN, which in turn leads to the recruitment of the protein tyrosine phosphatase 1/PTPN6, leading to the negative regulation of BCR signaling. If this negative signaling from is of sufficient strength, apoptosis of the B-cell can be induced. This is B-cell receptor CD22 from Pan troglodytes (Chimpanzee).